We begin with the raw amino-acid sequence, 368 residues long: Proton-coupled zinc antiporter SLC30A8 (368 aa).

The Cytoplasmic segment spans residues 1–78 (MEFLERTYLV…AKWRLCAASA (78 aa)). His-51, Cys-52, and His-53 together coordinate Zn(2+). Positions 51 to 53 (HCH) match the HCH Motif; seals regulatory zinc-binding pocket motif. A helical transmembrane segment spans residues 79 to 99 (ICFFFMVAEVVGGHVAGSLAV). Topologically, residues 100 to 102 (LTD) are lumenal, vesicle. A helical membrane pass occupies residues 103 to 123 (AAHLLIDLTSFLLSLFSLWLS). Zn(2+)-binding residues include His-105 and Asp-109. Topologically, residues 124 to 139 (SRPPSKRLTFGWYRAE) are cytoplasmic. The helical transmembrane segment at 140 to 160 (ILGALLSVLCIWVVTGVLVYL) threads the bilayer. Residues 161–174 (ACERLLYPDYQIQA) lie on the Lumenal, vesicle side of the membrane. The helical transmembrane segment at 175–195 (GIMITVSGCAVAANIVLTLIL) threads the bilayer. At 196–216 (HQRHLGHNHKDAQANASVRAA) the chain is on the cytoplasmic side. A helical transmembrane segment spans residues 217 to 237 (FVHALGDVFQSTSVLISALII). Positions 219 and 223 each coordinate Zn(2+). Residues 238–245 (YFKPDYKM) are Lumenal, vesicle-facing. A helical membrane pass occupies residues 246–266 (ADPVCTFISSVLALASTVMIL). Residues 267–368 (KDFSILLMEG…SCLLCEDPQD (102 aa)) lie on the Cytoplasmic side of the membrane. Positions 300, 317, 344, 351, 360, and 363 each coordinate Zn(2+).

The protein belongs to the cation diffusion facilitator (CDF) transporter (TC 2.A.4) family. SLC30A subfamily. In terms of assembly, homodimer. In terms of tissue distribution, expressed in endocrine pancreatic islet alpha and beta cells. May be more abundant in beta cells than in alpha cells. Expressed in cubical epithelium lining thyroid follicles (at protein level). In the adrenal gland, detected in the cortex, but not in the medulla (at protein level).

Its subcellular location is the cytoplasmic vesicle. The protein localises to the secretory vesicle membrane. It is found in the cell membrane. It catalyses the reaction Zn(2+)(in) + 2 H(+)(out) = Zn(2+)(out) + 2 H(+)(in). Proton-coupled zinc ion antiporter mediating the entry of zinc into the lumen of pancreatic beta cell secretory granules, thereby regulating insulin secretion. The sequence is that of Proton-coupled zinc antiporter SLC30A8 from Rattus norvegicus (Rat).